We begin with the raw amino-acid sequence, 490 residues long: Acetyl-coenzyme A carboxylase carboxyl transferase subunit beta, chloroplastic (490 aa).

The segment at 184-203 is disordered; that stretch reads LNSSENEGSSRRTRTKGSDL. In terms of domain architecture, CoA carboxyltransferase N-terminal spans 221-490; that stretch reads LWVQCENCYG…PLNQKSSKIK (270 aa). Cys-225, Cys-228, Cys-244, and Cys-247 together coordinate Zn(2+). The C4-type zinc-finger motif lies at 225–247; it reads CENCYGLNYKKFLKSKMNICEQC.

The protein belongs to the AccD/PCCB family. In terms of assembly, acetyl-CoA carboxylase is a heterohexamer composed of biotin carboxyl carrier protein, biotin carboxylase and 2 subunits each of ACCase subunit alpha and ACCase plastid-coded subunit beta (accD). Requires Zn(2+) as cofactor.

It is found in the plastid. Its subcellular location is the chloroplast stroma. The catalysed reaction is N(6)-carboxybiotinyl-L-lysyl-[protein] + acetyl-CoA = N(6)-biotinyl-L-lysyl-[protein] + malonyl-CoA. It participates in lipid metabolism; malonyl-CoA biosynthesis; malonyl-CoA from acetyl-CoA: step 1/1. Component of the acetyl coenzyme A carboxylase (ACC) complex. Biotin carboxylase (BC) catalyzes the carboxylation of biotin on its carrier protein (BCCP) and then the CO(2) group is transferred by the transcarboxylase to acetyl-CoA to form malonyl-CoA. This Solanum bulbocastanum (Wild potato) protein is Acetyl-coenzyme A carboxylase carboxyl transferase subunit beta, chloroplastic.